The primary structure comprises 691 residues: POU domain, class 6, transcription factor 2 (691 aa).

Residues methionine 25 to alanine 36 show a composition bias toward basic and acidic residues. Disordered stretches follow at residues methionine 25–proline 93, leucine 186–valine 297, and serine 435–serine 461. Positions leucine 186–glutamine 195 are enriched in low complexity. Residues glutamine 196–glutamine 210 are compositionally biased toward pro residues. Over residues alanine 211–leucine 220 the composition is skewed to low complexity. Residues glutamine 221 to proline 238 are compositionally biased toward pro residues. 2 stretches are compositionally biased toward low complexity: residues threonine 239–proline 280 and serine 438–serine 461. A POU-specific domain is found at valine 476–glutamate 586. A DNA-binding region (homeobox) is located at residues lysine 607–isoleucine 666.

This sequence belongs to the POU transcription factor family. Class-6 subfamily. Expressed only within the CNS, where its expression is restricted to the medical habenulla, to a dispersed population of neurons in the dorsal hypothalamus, and to subsets of ganglion and amacrine cells in the retina.

It localises to the nucleus. In terms of biological role, probable transcription factor likely to be involved in early steps in the differentiation of amacrine and ganglion cells. Recognizes and binds to the DNA sequence 5'-ATGCAAAT-3'. Isoform 1 does not bind DNA. The chain is POU domain, class 6, transcription factor 2 (POU6F2) from Homo sapiens (Human).